The primary structure comprises 1052 residues: MEGSEPVAAHQGEEASCSSWGTGSTNKNLPIMSTASVEIDDALYSRQRYVLGDTAMQKMAKSHVFLSGMGGLGLEIAKNLVLAGIKAVTIHDTEKCQAWDLGTNFFLSEDDVVNKRNRAEAVLKHIAELNPYVHVTSSSVPFNETTDLSFLDKYQCVVLTEMKLPLQKKINDFCRSQCPPIKFISADVHGIWSRLFCDFGDEFEVLDTTGEEPKEIFISNITQANPGIVTCLENHPHKLETGQFLTFREINGMTGLNGSIQQITVISPFSFSIGDTTELEPYLHGGIAVQVKTPKTVFFESLERQLKHPKCLIVDFSNPEAPLEIHTAMLALDQFQEKYSRKPNVGCQQDSEELLKLATSISETLEEKPDVNADIVHWLSWTAQGFLSPLAAAVGGVASQEVLKAVTGKFSPLCQWLYLEAADIVESLGKPECEEFLPRGDRYDALRACIGDTLCQKLQNLNIFLVGCGAIGCEMLKNFALLGVGTSKEKGMITVTDPDLIEKSNLNRQFLFRPHHIQKPKSYTAADATLKINSQIKIDAHLNKVCPTTETIYNDEFYTKQDVIITALDNVEARRYVDSRCLANLRPLLDSGTMGTKGHTEVIVPHLTESYNSHRDPPEEEIPFCTLKSFPAAIEHTIQWARDKFESSFSHKPSLFNKFWQTYSSAEEVLQKIQSGHSLEGCFQVIKLLSRRPRNWSQCVELARLKFEKYFNHKALQLLHCFPLDIRLKDGSLFWQSPKRPPSPIKFDLNEPLHLSFLQNAAKLYATVYCIPFAEEDLSADALLNILSEVKIQEFKPSNKVVQTDETARKPDHVPISSEDERNAIFQLEKAILSNEATKSDLQMAVLSFEKDDDHNGHIDFITAASNLRAKMYSIEPADRFKTKRIAGKIIPAIATTTATVSGLVALEMIKVTGGYPFEAYKNCFLNLAIPIVVFTETTEVRKTKIRNGISFTIWDRWTVHGKEDFTLLDFINAVKEKYGIEPTMVVQGVKMLYVPVMPGHAKRLKLTMHKLVKPTTEKKYVDLTVSFAPDIDGDEDLPGPPVRYYFSHDTD.

Met1 carries the N-acetylmethionine modification. Positions 1 to 21 (MEGSEPVAAHQGEEASCSSWG) are disordered. Residue Arg46 participates in ATP binding. A Phosphothreonine modification is found at Thr54. Phosphoserine is present on Ser301. Residues Ala470 and Asp497 each coordinate ATP. Residues Asp499 and Glu502 each contribute to the Mg(2+) site. ATP is bound by residues Asn505, Arg508, Gln509, and Lys521. Lys544 is modified (N6-acetyllysine). Position 545 (Val545) interacts with ATP. Asp569 contacts Mg(2+). Asn570 is a binding site for ATP. The Glycyl thioester intermediate role is filled by Cys625. Position 729 is an N6-acetyllysine (Lys729). Phosphoserine is present on Ser737.

This sequence belongs to the ubiquitin-activating E1 family. In terms of assembly, forms a thioester with UBD in cells stimulated with tumor necrosis factor-alpha (TNFa) and interferon-gamma (IFNg). In terms of tissue distribution, widely expressed. Isoform 2 is predominantly expressed in testis with higher expression in adult testis than in fetal testis.

It catalyses the reaction ATP + ubiquitin + [E1 ubiquitin-activating enzyme]-L-cysteine = AMP + diphosphate + S-ubiquitinyl-[E1 ubiquitin-activating enzyme]-L-cysteine.. It functions in the pathway protein modification; protein ubiquitination. In terms of biological role, activates ubiquitin by first adenylating its C-terminal glycine residue with ATP, and thereafter linking this residue to the side chain of a cysteine residue in E1, yielding a ubiquitin-E1 thioester and free AMP. Specific for ubiquitin, does not activate ubiquitin-like peptides. Also activates UBD/FAT10 conjugation via adenylation of its C-terminal glycine. Differs from UBE1 in its specificity for substrate E2 charging. Does not charge cell cycle E2s, such as CDC34. Essential for embryonic development. Isoform 2 may play a key role in ubiquitin system and may influence spermatogenesis and male fertility. The chain is Ubiquitin-like modifier-activating enzyme 6 (UBA6) from Homo sapiens (Human).